The primary structure comprises 92 residues: MARSLKKGPFIDDHLMKKVEALEEGGKKTVIKTWSRRSTIFPNFIGHTIAVYDGRKHVPVYVTEDMVGHKLGEFAPTRTYKGHGADDKKTKR.

This sequence belongs to the universal ribosomal protein uS19 family.

Protein S19 forms a complex with S13 that binds strongly to the 16S ribosomal RNA. This chain is Small ribosomal subunit protein uS19, found in Macrococcus caseolyticus (strain JCSC5402) (Macrococcoides caseolyticum).